The sequence spans 268 residues: tRNA (guanine-N(1)-)-methyltransferase (268 aa).

S-adenosyl-L-methionine-binding positions include Gly-113 and 133 to 138 (IGDYVL). The disordered stretch occupies residues 238–268 (RCPPDPFAHQGPVYEGDQLERPEGGEQGASR).

It belongs to the RNA methyltransferase TrmD family. In terms of assembly, homodimer.

The protein resides in the cytoplasm. It catalyses the reaction guanosine(37) in tRNA + S-adenosyl-L-methionine = N(1)-methylguanosine(37) in tRNA + S-adenosyl-L-homocysteine + H(+). Functionally, specifically methylates guanosine-37 in various tRNAs. The polypeptide is tRNA (guanine-N(1)-)-methyltransferase (Thermomicrobium roseum (strain ATCC 27502 / DSM 5159 / P-2)).